The chain runs to 31 residues: Cytochrome b6-f complex subunit 6 (31 aa).

Residues 4–26 form a helical membrane-spanning segment; the sequence is ITSYFGFLLAASTITPALLIGLS.

It belongs to the PetL family. In terms of assembly, the 4 large subunits of the cytochrome b6-f complex are cytochrome b6, subunit IV (17 kDa polypeptide, PetD), cytochrome f and the Rieske protein, while the 4 small subunits are PetG, PetL, PetM and PetN. The complex functions as a dimer.

The protein localises to the plastid. It is found in the chloroplast thylakoid membrane. Functionally, component of the cytochrome b6-f complex, which mediates electron transfer between photosystem II (PSII) and photosystem I (PSI), cyclic electron flow around PSI, and state transitions. PetL is important for photoautotrophic growth as well as for electron transfer efficiency and stability of the cytochrome b6-f complex. In Liriodendron tulipifera (Tuliptree), this protein is Cytochrome b6-f complex subunit 6.